A 148-amino-acid polypeptide reads, in one-letter code: uncharacterized protein (148 aa).

Positions 37–94 are enriched in low complexity; the sequence is NNNNYNNNNKNNNNNNNNNNNNNNNNNNNNNNNYINSCNSNNNNNNNNNNTKNNNINS. The disordered stretch occupies residues 37 to 99; that stretch reads NNNNYNNNNK…NNINSRTDKN (63 aa).

This is an uncharacterized protein from Dictyostelium discoideum (Social amoeba).